The following is a 940-amino-acid chain: UvrABC system protein A (940 aa).

Residue 31-38 (GLSGSGKS) participates in ATP binding. Residues 252–279 (CPHCGYSMQELEPRLFSFNNPAGACGTC) form a C4-type zinc finger. ABC transporter domains lie at 309–586 (WDQK…PDSL) and 606–936 (RDKN…RFLK). 639-646 (GVSGSGKS) contacts ATP. A C4-type zinc finger spans residues 739-765 (CEACQGDGVIKVEMHFLPDVYVPCDVC).

It belongs to the ABC transporter superfamily. UvrA family. In terms of assembly, forms a heterotetramer with UvrB during the search for lesions.

It is found in the cytoplasm. The UvrABC repair system catalyzes the recognition and processing of DNA lesions. UvrA is an ATPase and a DNA-binding protein. A damage recognition complex composed of 2 UvrA and 2 UvrB subunits scans DNA for abnormalities. When the presence of a lesion has been verified by UvrB, the UvrA molecules dissociate. This Vibrio vulnificus (strain YJ016) protein is UvrABC system protein A.